Here is a 219-residue protein sequence, read N- to C-terminus: UPF0073 inner membrane protein YqfA (219 aa).

Residues 1-23 are Cytoplasmic-facing; the sequence is MVQKPLIKQGYSLAEEIANSVSH. A helical membrane pass occupies residues 24–44; that stretch reads GIGLVFGIVGLVLLLVQAVDL. The Periplasmic segment spans residues 45–53; it reads NASATAITS. The helical transmembrane segment at 54 to 74 threads the bilayer; that stretch reads YSLYGGSMILLFLASTLYHAI. Topologically, residues 75–90 are cytoplasmic; it reads PHQRAKMWLKKFDHCA. Residues 91–111 traverse the membrane as a helical segment; sequence IYLLIAGTYTPFLLVGLDSPL. Topologically, residues 112 to 113 are periplasmic; the sequence is AR. Residues 114–134 form a helical membrane-spanning segment; it reads GLMIVIWSLALLGILFKLTIA. Residues 135-138 lie on the Cytoplasmic side of the membrane; the sequence is HRFK. The helical transmembrane segment at 139-159 threads the bilayer; it reads ILSLVTYLAMGWLSLVVIYEM. Residues 160–165 are Periplasmic-facing; sequence AVKLAA. A helical transmembrane segment spans residues 166–186; the sequence is GSVTLLAVGGVVYSLGVIFYV. At 187–195 the chain is on the cytoplasmic side; sequence CKRIPYNHA. Residues 196-216 form a helical membrane-spanning segment; sequence IWHGFVLGGSVCHFLAIYLYI. Topologically, residues 217–219 are periplasmic; that stretch reads GQA.

It belongs to the UPF0073 (Hly-III) family.

The protein localises to the cell inner membrane. The chain is UPF0073 inner membrane protein YqfA (yqfA) from Escherichia coli O157:H7.